The primary structure comprises 176 residues: Tubulin polymerization-promoting protein family member 3 (176 aa).

Ala2 carries the post-translational modification N-acetylalanine.

This sequence belongs to the TPPP family.

It localises to the cytoplasm. It is found in the cytoskeleton. Regulator of microtubule dynamic that has microtubule bundling activity. Required for embryo implantation; possibly by regulating beta-catenin. Also required for decidualization via regulation of beta-catenin. The polypeptide is Tubulin polymerization-promoting protein family member 3 (Tppp3) (Rattus norvegicus (Rat)).